The sequence spans 252 residues: Probable transcriptional regulatory protein all4276 (252 aa).

Belongs to the TACO1 family.

It localises to the cytoplasm. The protein is Probable transcriptional regulatory protein all4276 of Nostoc sp. (strain PCC 7120 / SAG 25.82 / UTEX 2576).